Reading from the N-terminus, the 307-residue chain is MFSFNMFDHPIPRVFQNRFSTQYRCFSVSMLAGPNDRSDVEKGGKIIMPPSALDQLSRLNITYPMLFKLTNKNSDRMTHCGVLEFVADEGICYLPHWMMQNLLLEEGGLVQVESVNLQVATYSKFQPQSPDFLDITNPKAVLENALRNFACLTTGDVIAINYNEKIYELRVMETKPDKAVSIIECDMNVDFDAPLGYKEPERPVQHEESIEGEADHSGYAGEVGFRAFSGSGNRLDGKKKGVEPSPSPIKPGDIKRGIPNYEFKLGKITFIRNSRPMVKKVEEDEAGGRFVAFSGEGQSLRKKGRKP.

The residue at position 1 (methionine 1) is an N-acetylmethionine. Serine 129, serine 231, serine 245, serine 247, and serine 299 each carry phosphoserine. Disordered stretches follow at residues 230-255 and 282-307; these read GSGNRLDGKKKGVEPSPSPIKPGDIK and EEDEAGGRFVAFSGEGQSLRKKGRKP.

Belongs to the UFD1 family. Interacts with USP13. Heterodimer with NPLOC4, this heterodimer binds VCP and inhibits Golgi membrane fusion. Interacts with ZFAND2B; probably through VCP.

It is found in the nucleus. Its subcellular location is the cytoplasm. The protein localises to the cytosol. Its pathway is protein degradation; proteasomal ubiquitin-dependent pathway. Functionally, essential component of the ubiquitin-dependent proteolytic pathway which degrades ubiquitin fusion proteins. The ternary complex containing UFD1, VCP and NPLOC4 binds ubiquitinated proteins and is necessary for the export of misfolded proteins from the ER to the cytoplasm, where they are degraded by the proteasome. The NPLOC4-UFD1-VCP complex regulates spindle disassembly at the end of mitosis and is necessary for the formation of a closed nuclear envelope. It may be involved in the development of some ectoderm-derived structures. Acts as a negative regulator of type I interferon production via the complex formed with VCP and NPLOC4, which binds to RIGI and recruits RNF125 to promote ubiquitination and degradation of RIGI. This Rattus norvegicus (Rat) protein is Ubiquitin recognition factor in ER-associated degradation protein 1.